Here is a 469-residue protein sequence, read N- to C-terminus: MSHDVITRFAPSPTGHLHLGGARTALFNWLYAKHNNGKFLLRIEDTDKKRSSQELIDSIINAMSWLKIHYDGKAVLQSENISRHVEIANQLMLNNKAYYCYCSEEEINKEKEESAKKGLYYKHNCIWKNKSAPNSNITRVVRLKSPTDGVTSFDDEVYGNITVNNSQLDDMILLRSDNTPTYLLSVVVDDHDMNISHIIRGTDHLTNTARQLLIYNALEWDPPKFAHIPLIHDENGNKLSKRHQAIGIHEYKNSGILPEAIFNYLLRMGWSHENDEVITIDQAIRWFSIEGIGQSPSRLDSKKLEFLNNHYINITDNETILNMIIPIIEEKTGHIITDVKKGYLLKGLSELKKRTKNLVNLAKESLFYVEDIPISIDQESITVIKDYKHIFSILYDNLSKISEKDWNHNILMSIIKDISCNLEVKISIVYHCLRASITGRMNAPSIIEIMINLQHKECLQRIKYALDVI.

A 'HIGH' region motif is present at residues 11-21 (PSPTGHLHLGG). The short motif at 238–242 (KLSKR) is the 'KMSKS' region element. K241 contributes to the ATP binding site.

Belongs to the class-I aminoacyl-tRNA synthetase family. Glutamate--tRNA ligase type 1 subfamily. In terms of assembly, monomer.

Its subcellular location is the cytoplasm. The catalysed reaction is tRNA(Glu) + L-glutamate + ATP = L-glutamyl-tRNA(Glu) + AMP + diphosphate. Functionally, catalyzes the attachment of glutamate to tRNA(Glu) in a two-step reaction: glutamate is first activated by ATP to form Glu-AMP and then transferred to the acceptor end of tRNA(Glu). The sequence is that of Glutamate--tRNA ligase 1 from Ehrlichia canis (strain Jake).